The following is a 66-amino-acid chain: Large ribosomal subunit protein bL35 (66 aa).

A compositionally biased stretch (basic residues) spans 1–44 (MPKLKSHRGAAKRFRKTASGAIKRRGAYRNHILTKKSTKQKRHL). The disordered stretch occupies residues 1-48 (MPKLKSHRGAAKRFRKTASGAIKRRGAYRNHILTKKSTKQKRHLRVEA).

This sequence belongs to the bacterial ribosomal protein bL35 family.

The chain is Large ribosomal subunit protein bL35 from Legionella pneumophila (strain Corby).